An 863-amino-acid polypeptide reads, in one-letter code: Glycogen phosphorylase (863 aa).

Lysine 618 bears the N6-(pyridoxal phosphate)lysine mark.

Belongs to the glycogen phosphorylase family. Pyridoxal 5'-phosphate serves as cofactor.

The enzyme catalyses [(1-&gt;4)-alpha-D-glucosyl](n) + phosphate = [(1-&gt;4)-alpha-D-glucosyl](n-1) + alpha-D-glucose 1-phosphate. Phosphorylase is an important allosteric enzyme in carbohydrate metabolism. Enzymes from different sources differ in their regulatory mechanisms and in their natural substrates. However, all known phosphorylases share catalytic and structural properties. In Mycobacterium bovis (strain ATCC BAA-935 / AF2122/97), this protein is Glycogen phosphorylase (glgP).